The sequence spans 313 residues: Methionyl-tRNA formyltransferase (313 aa).

(6S)-5,6,7,8-tetrahydrofolate is bound at residue 110-113 (SLLP).

This sequence belongs to the Fmt family.

It catalyses the reaction L-methionyl-tRNA(fMet) + (6R)-10-formyltetrahydrofolate = N-formyl-L-methionyl-tRNA(fMet) + (6S)-5,6,7,8-tetrahydrofolate + H(+). In terms of biological role, attaches a formyl group to the free amino group of methionyl-tRNA(fMet). The formyl group appears to play a dual role in the initiator identity of N-formylmethionyl-tRNA by promoting its recognition by IF2 and preventing the misappropriation of this tRNA by the elongation apparatus. The protein is Methionyl-tRNA formyltransferase of Lysinibacillus sphaericus (strain C3-41).